A 271-amino-acid polypeptide reads, in one-letter code: Dermonecrotic toxin LarSicTox-alphaIB1c (271 aa).

Residue His-3 is part of the active site. Residues Glu-23 and Asp-25 each coordinate Mg(2+). Catalysis depends on His-39, which acts as the Nucleophile. 2 cysteine pairs are disulfide-bonded: Cys-43-Cys-49 and Cys-45-Cys-188. Mg(2+) is bound at residue Asp-83. An N-linked (GlcNAc...) asparagine glycan is attached at Asn-248.

Belongs to the arthropod phospholipase D family. Class II subfamily. It depends on Mg(2+) as a cofactor. Expressed by the venom gland.

It localises to the secreted. The enzyme catalyses an N-(acyl)-sphingosylphosphocholine = an N-(acyl)-sphingosyl-1,3-cyclic phosphate + choline. The catalysed reaction is an N-(acyl)-sphingosylphosphoethanolamine = an N-(acyl)-sphingosyl-1,3-cyclic phosphate + ethanolamine. It carries out the reaction a 1-acyl-sn-glycero-3-phosphocholine = a 1-acyl-sn-glycero-2,3-cyclic phosphate + choline. It catalyses the reaction a 1-acyl-sn-glycero-3-phosphoethanolamine = a 1-acyl-sn-glycero-2,3-cyclic phosphate + ethanolamine. Its function is as follows. Dermonecrotic toxins cleave the phosphodiester linkage between the phosphate and headgroup of certain phospholipids (sphingolipid and lysolipid substrates), forming an alcohol (often choline) and a cyclic phosphate. This toxin acts on sphingomyelin (SM). It may also act on ceramide phosphoethanolamine (CPE), lysophosphatidylcholine (LPC) and lysophosphatidylethanolamine (LPE), but not on lysophosphatidylserine (LPS), and lysophosphatidylglycerol (LPG). It acts by transphosphatidylation, releasing exclusively cyclic phosphate products as second products. Induces dermonecrosis, hemolysis, increased vascular permeability, edema, inflammatory response, and platelet aggregation. The protein is Dermonecrotic toxin LarSicTox-alphaIB1c of Loxosceles arizonica (Arizona brown spider).